The chain runs to 46 residues: Delta-actitoxin-Avd1d (46 aa).

3 disulfide bridges follow: C4–C44, C6–C34, and C27–C45.

Belongs to the sea anemone sodium channel inhibitory toxin family. Type I subfamily.

It localises to the secreted. The protein resides in the nematocyst. Functionally, binds specifically to voltage-gated sodium channels (Nav), thereby delaying their inactivation during signal transduction. Thus it strongly stimulates mammalian cardiac muscle contraction. In Anemonia sulcata (Mediterranean snakelocks sea anemone), this protein is Delta-actitoxin-Avd1d.